We begin with the raw amino-acid sequence, 527 residues long: GMP synthase [glutamine-hydrolyzing] (527 aa).

The Glutamine amidotransferase type-1 domain occupies 4-202 (KILILDFGSQ…VLQICGARAD (199 aa)). Cys81 (nucleophile) is an active-site residue. Catalysis depends on residues His176 and Glu178. One can recognise a GMPS ATP-PPase domain in the interval 203–395 (WEMGNYIDEA…LGLPPAMVYR (193 aa)). 230 to 236 (SGGVDSS) contributes to the ATP binding site.

Homodimer.

The enzyme catalyses XMP + L-glutamine + ATP + H2O = GMP + L-glutamate + AMP + diphosphate + 2 H(+). The protein operates within purine metabolism; GMP biosynthesis; GMP from XMP (L-Gln route): step 1/1. Its function is as follows. Catalyzes the synthesis of GMP from XMP. This is GMP synthase [glutamine-hydrolyzing] from Paraburkholderia phytofirmans (strain DSM 17436 / LMG 22146 / PsJN) (Burkholderia phytofirmans).